The sequence spans 422 residues: Growth arrest-specific protein 7 (422 aa).

The segment at 1 to 117 (MATALQKPGM…SPGRKQSKEN (117 aa)) is disordered. The WW domain maps to 22 to 55 (VILPPGWHSYLSPQGRRYYVNTTTNETTWERPSS). The span at 41 to 52 (VNTTTNETTWER) shows a compositional bias: polar residues. Residues 53–65 (PSSSPGISASPGP) are compositionally biased toward low complexity. Serine 62 and serine 108 each carry phosphoserine. Over residues 95-117 (RKSTGDSQNLGSSSPGRKQSKEN) the composition is skewed to polar residues. In terms of domain architecture, F-BAR spans 141–402 (TEWSYCDYFW…LLRKVDPAKD (262 aa)). The stretch at 254–329 (ENFKKDMKKC…RKSTQAGDDL (76 aa)) forms a coiled coil.

The protein localises to the cytoplasm. May play a role in promoting maturation and morphological differentiation of cerebellar neurons. This is Growth arrest-specific protein 7 (Gas7) from Rattus norvegicus (Rat).